We begin with the raw amino-acid sequence, 185 residues long: Photosystem I assembly protein Ycf4 (185 aa).

Transmembrane regions (helical) follow at residues 24 to 44 and 66 to 86; these read YIIGGMLTIGGIGFLLASISS and IIMGAYGVVANLLNFYLWYMV.

This sequence belongs to the Ycf4 family.

Its subcellular location is the cellular thylakoid membrane. In terms of biological role, seems to be required for the assembly of the photosystem I complex. This Prochlorococcus marinus (strain MIT 9312) protein is Photosystem I assembly protein Ycf4.